A 253-amino-acid chain; its full sequence is 5'/3'-nucleotidase SurE (253 aa).

The a divalent metal cation site is built by D8, D9, S39, and N92.

It belongs to the SurE nucleotidase family. Requires a divalent metal cation as cofactor.

Its subcellular location is the cytoplasm. It carries out the reaction a ribonucleoside 5'-phosphate + H2O = a ribonucleoside + phosphate. It catalyses the reaction a ribonucleoside 3'-phosphate + H2O = a ribonucleoside + phosphate. The enzyme catalyses [phosphate](n) + H2O = [phosphate](n-1) + phosphate + H(+). In terms of biological role, nucleotidase with a broad substrate specificity as it can dephosphorylate various ribo- and deoxyribonucleoside 5'-monophosphates and ribonucleoside 3'-monophosphates with highest affinity to 3'-AMP. Also hydrolyzes polyphosphate (exopolyphosphatase activity) with the preference for short-chain-length substrates (P20-25). Might be involved in the regulation of dNTP and NTP pools, and in the turnover of 3'-mononucleotides produced by numerous intracellular RNases (T1, T2, and F) during the degradation of various RNAs. The polypeptide is 5'/3'-nucleotidase SurE (Enterobacter sp. (strain 638)).